The following is a 183-amino-acid chain: Putative NAD(P)H nitroreductase YdjA (183 aa).

FMN-binding positions include 10–12, Arg-35, and His-39; that span reads RRS. 121-126 contributes to the NAD(+) binding site; sequence AAVAQG. Residue 131-133 coordinates FMN; that stretch reads WRS.

The protein belongs to the nitroreductase family. Homodimer. Requires FMN as cofactor.

The sequence is that of Putative NAD(P)H nitroreductase YdjA (ydjA) from Escherichia coli O157:H7.